The chain runs to 161 residues: Ribonuclease H (161 aa).

One can recognise an RNase H type-1 domain in the interval 3 to 144; that stretch reads GLKQISIYTD…CDDLARQAAE (142 aa). Residues Asp12, Glu50, Asp72, and Asp136 each coordinate Mg(2+). The segment at 133–161 is disordered; sequence ERCDDLARQAAEAKPSQEDSGYINQQAQA. The span at 150 to 161 shows a compositional bias: polar residues; the sequence is EDSGYINQQAQA.

It belongs to the RNase H family. Monomer. Requires Mg(2+) as cofactor.

It is found in the cytoplasm. It carries out the reaction Endonucleolytic cleavage to 5'-phosphomonoester.. In terms of biological role, endonuclease that specifically degrades the RNA of RNA-DNA hybrids. The polypeptide is Ribonuclease H (Shewanella halifaxensis (strain HAW-EB4)).